The sequence spans 940 residues: Isoleucine--tRNA ligase (940 aa).

A 'HIGH' region motif is present at residues 58–68 (PYANGSIHIGH). Glutamate 564 is a binding site for L-isoleucyl-5'-AMP. The 'KMSKS' region motif lies at 605–609 (KMSKS). ATP is bound at residue lysine 608. Zn(2+)-binding residues include cysteine 903, cysteine 906, cysteine 923, and cysteine 926.

It belongs to the class-I aminoacyl-tRNA synthetase family. IleS type 1 subfamily. Monomer. Zn(2+) serves as cofactor.

The protein localises to the cytoplasm. The enzyme catalyses tRNA(Ile) + L-isoleucine + ATP = L-isoleucyl-tRNA(Ile) + AMP + diphosphate. In terms of biological role, catalyzes the attachment of isoleucine to tRNA(Ile). As IleRS can inadvertently accommodate and process structurally similar amino acids such as valine, to avoid such errors it has two additional distinct tRNA(Ile)-dependent editing activities. One activity is designated as 'pretransfer' editing and involves the hydrolysis of activated Val-AMP. The other activity is designated 'posttransfer' editing and involves deacylation of mischarged Val-tRNA(Ile). This Shewanella sediminis (strain HAW-EB3) protein is Isoleucine--tRNA ligase.